The sequence spans 142 residues: Large ribosomal subunit protein uL11 (142 aa).

The protein belongs to the universal ribosomal protein uL11 family. In terms of assembly, part of the ribosomal stalk of the 50S ribosomal subunit. Interacts with L10 and the large rRNA to form the base of the stalk. L10 forms an elongated spine to which L12 dimers bind in a sequential fashion forming a multimeric L10(L12)X complex. One or more lysine residues are methylated.

Functionally, forms part of the ribosomal stalk which helps the ribosome interact with GTP-bound translation factors. In Histophilus somni (strain 129Pt) (Haemophilus somnus), this protein is Large ribosomal subunit protein uL11.